A 157-amino-acid polypeptide reads, in one-letter code: Ubiquitin-like protein 4A (157 aa).

Positions 1–76 (MQLTVKALQG…LNLVVKPLEK (76 aa)) constitute a Ubiquitin-like domain. A Glycyl lysine isopeptide (Lys-Gly) (interchain with G-Cter in ubiquitin) cross-link involves residue lysine 48. A Phosphoserine modification is found at serine 90. A required and sufficient for interaction with BAG6 region spans residues 96 to 138 (WQLISKVLARHFSVADASRVLEQLQRDYDRSLSRLTLDDIERL).

As to quaternary structure, component of the BAG6/BAT3 complex, at least composed of BAG6, UBL4A and GET4/TRC35. Interacts with BAG6; the interaction is direct and required for UBL4A protein stability. Interacts with USP13; may be indirect via BAG6. In terms of processing, polyubiquitinated. Ubiquitination by AMFR and deubiquitination by USP13 may regulate the interaction between the BAG6/BAT3 complex and SGTA and therefore may regulate client proteins fate.

The protein localises to the cytoplasm. It localises to the cytosol. Its subcellular location is the nucleus. Its function is as follows. As part of a cytosolic protein quality control complex, the BAG6/BAT3 complex, maintains misfolded and hydrophobic patches-containing proteins in a soluble state and participates in their proper delivery to the endoplasmic reticulum or alternatively can promote their sorting to the proteasome where they undergo degradation. The BAG6/BAT3 complex is involved in the post-translational delivery of tail-anchored/type II transmembrane proteins to the endoplasmic reticulum membrane. Recruited to ribosomes, it interacts with the transmembrane region of newly synthesized tail-anchored proteins and together with SGTA and ASNA1 mediates their delivery to the endoplasmic reticulum. Client proteins that cannot be properly delivered to the endoplasmic reticulum are ubiquitinated and sorted to the proteasome. Similarly, the BAG6/BAT3 complex also functions as a sorting platform for proteins of the secretory pathway that are mislocalized to the cytosol either delivering them to the proteasome for degradation or to the endoplasmic reticulum. The BAG6/BAT3 complex also plays a role in the endoplasmic reticulum-associated degradation (ERAD), a quality control mechanism that eliminates unwanted proteins of the endoplasmic reticulum through their retrotranslocation to the cytosol and their targeting to the proteasome. It maintains these retrotranslocated proteins in an unfolded yet soluble state condition in the cytosol to ensure their proper delivery to the proteasome. This is Ubiquitin-like protein 4A from Mus musculus (Mouse).